The primary structure comprises 182 residues: MACCSTSFCGFPTCSTGGTCGSNFCQPTCCQTSCCQPTSIQTSCCQPTSIQTSCCQPTSIQTSCCQPISIQTSCCQPTCLQTSGCETGCGIGGSIGYGQVGSSGAVSSRTKWCRPDCRVEGTSLPPCCVVSCTSPSCCQLYYAQASCCRPSYCGQSCCRPACCCQPTCIEPVCEPTCCEPTC.

Repeat copies occupy residues 27-36, 37-46, 47-56, 57-66, 67-76, and 77-86. Positions 27–86 are 6 X 10 AA tandem repeats; it reads PTCCQTSCCQPTSIQTSCCQPTSIQTSCCQPTSIQTSCCQPISIQTSCCQPTCLQTSGCE.

Functionally, the keratin products of mammalian epidermal derivatives such as wool and hair consist of microfibrils embedded in a rigid matrix of other proteins. The matrix proteins include the high-sulfur and high-tyrosine keratins, having molecular weights of 6-20 kDa, whereas the microfibrils contain the larger, low-sulfur keratins (40-56 kDa). In Ovis aries (Sheep), this protein is Keratin, high-sulfur matrix protein, B2D.